We begin with the raw amino-acid sequence, 601 residues long: Glutathione-regulated potassium-efflux system protein KefB (601 aa).

A run of 13 helical transmembrane segments spans residues 4–24 (ADLL…VPLA), 29–49 (IGAV…GLGF), 55–75 (EILH…GLEL), 87–107 (IFGV…GLLM), 111–131 (FLWQ…TAMA), 152–172 (VLLF…LLAG), 177–197 (HFDW…LIGG), 207–227 (FIAA…LVLS), 230–250 (LFMD…GVLL), 262–282 (AIDP…GMSL), 284–304 (LGVL…LVAI), 324–344 (MQFA…FSTA), and 356–376 (ALLL…MKGI). An RCK N-terminal domain is found at 400–519 (KPQVIVVGFG…AGVTQFSRET (120 aa)).

Belongs to the monovalent cation:proton antiporter 2 (CPA2) transporter (TC 2.A.37) family. KefB subfamily. As to quaternary structure, interacts with the regulatory subunit KefG.

It is found in the cell inner membrane. Pore-forming subunit of a potassium efflux system that confers protection against electrophiles. Catalyzes K(+)/H(+) antiport. The polypeptide is Glutathione-regulated potassium-efflux system protein KefB (Salmonella schwarzengrund (strain CVM19633)).